The chain runs to 882 residues: Exo-beta-D-glucosaminidase ARB_07888 (882 aa).

Residues 1–21 (MWFVFRPAAIPALLLTLGVSA) form the signal peptide. Residues 22 to 31 (LSPLRPLVST) constitute a propeptide that is removed on maturation. Asparagine 86, asparagine 200, asparagine 234, asparagine 237, asparagine 287, and asparagine 442 each carry an N-linked (GlcNAc...) asparagine glycan. Aspartate 466 functions as the Proton donor in the catalytic mechanism. Catalysis depends on glutamate 538, which acts as the Nucleophile. N-linked (GlcNAc...) asparagine glycosylation is found at asparagine 688, asparagine 773, and asparagine 816.

Belongs to the glycosyl hydrolase 2 family. Monomer.

It is found in the secreted. It catalyses the reaction Hydrolysis of chitosan or chitosan oligosaccharides to remove successive D-glucosamine residues from the non-reducing termini.. Its function is as follows. Hydrolyzes chitosan and chitooligosaccharides with retention of anomeric configuration. The chain is Exo-beta-D-glucosaminidase ARB_07888 from Arthroderma benhamiae (strain ATCC MYA-4681 / CBS 112371) (Trichophyton mentagrophytes).